The primary structure comprises 486 residues: Zinc metalloproteinase-disintegrin VMP-II (486 aa).

A signal peptide spans M1–S20. Positions I21–E190 are excised as a propeptide. Pyrrolidone carboxylic acid is present on Q191. A Peptidase M12B domain is found at R197–P394. Ca(2+) contacts are provided by E200 and D284. 3 disulfide bridges follow: C308–C389, C348–C372, and C350–C355. H333 serves as a coordination point for Zn(2+). Residue E334 is part of the active site. The Zn(2+) site is built by H337 and H343. 2 residues coordinate Ca(2+): C389 and N392. Residues P402–G486 enclose the Disintegrin domain. Disulfide bonds link C405–C424, C416–C434, C418–C429, C428–C451, C442–C448, C447–C472, and C460–C479. The Cell attachment site signature appears at R464–D466.

It belongs to the venom metalloproteinase (M12B) family. P-II subfamily. P-IIb sub-subfamily. In terms of assembly, monomer. It depends on Zn(2+) as a cofactor. In terms of tissue distribution, expressed by the venom gland.

The protein localises to the secreted. Snake venom zinc metalloproteinase that inhibits ADP-induced platelet aggregation (probably by binding integrin alpha-IIb/beta-3 (ITGA2B/ITGB3)) and degrades fibrinogen. This Crotalus atrox (Western diamondback rattlesnake) protein is Zinc metalloproteinase-disintegrin VMP-II.